The primary structure comprises 915 residues: MAGEKGGSRDEEREPLTRGSIEFRDSINSFDYSSSTASLSLAVIDRINGSTQDSRLGEKDQRDDDHDQYRNEEEYDVEDADYIPSGGKTVQKTTKIVLWALLFLCVGGWSLAFVIFLFRGHDTPQTSIASEENISSGGARGNRITLDEVLGGEWAPRAHSISWFPGPNGEDGLILEKDNLSATAYLRVEDIVGRKDPKASKKSIVLMQKKMFTVGRETVYSAQAWPSPDLKTVLVLSDQQKNWRHSFTGKYWLFDVETQTGQPLDPGAPDRRIQLASWSPQSDAVVFTRDNNMFLRKLTSNEVATITTDGGVDLFYGVPDWVYEEEVFSGNSATWWASDGDYIAFLRTNESSVPDYPIQYFASRPSGENPKPGEENYPEVREVKYPKAGAPNPIVDLQFYDVGKGEVFSVDVTSEFADDDRLIIEVLWASNGKALVRETNRESDILSIAIIDVLSRTGRIVRREDVNALDGGWVEPTQSTRFIPADPDHGRLDDGYIDTVIYEGRDQLAYFTPLDNPKPIMLTKGHSEVVNAPSGVDLKRGLVYFVVAGNEPWERHIYSVNFDGTSLQPLTNVTESSYYDVSFSNGAGYALLNYRGPKVPWQKVINTPANENSFEAIIEQNDHLSRKLRLFSLESKVYQHVTVDGFSLPVMERRPPNFDPAKKYPVLFHLYGGPGSQTVSKKFSVDFQSYVASTLGYIVVTVDGRGTGHIGRKARCIIRGNLGHYEARDQIETAKKWAAKPYVDESRMAIWGWSYGGFMTLKTLEQDGGRTFQYGMAVAPVTDWRYYDSIYTERYMRTPQHNQGGYDTSAISNTTALASNIRFLLMHGTADDNVHIQNSLTLLDKLDLDDVDNYDVHVFPDSDHSIYFHNAHKMVYNRLGDWLINAFNGEWLKVHKPTPNNSLFRRAETWGGLPV.

Disordered stretches follow at residues 1–20 (MAGEKGGSRDEEREPLTRGS) and 52–74 (QDSRLGEKDQRDDDHDQYRNEEE). Over 1–95 (MAGEKGGSRD…GGKTVQKTTK (95 aa)) the chain is Cytoplasmic. A compositionally biased stretch (basic and acidic residues) spans 55 to 72 (RLGEKDQRDDDHDQYRNE). Residues 96–116 (IVLWALLFLCVGGWSLAFVIF) traverse the membrane as a helical; Signal-anchor for type II membrane protein segment. Residues 117–915 (LFRGHDTPQT…RAETWGGLPV (799 aa)) are Vacuolar-facing. 4 N-linked (GlcNAc...) asparagine glycosylation sites follow: Asn133, Asn179, Asn349, and Asn572. The Charge relay system role is filled by Ser754. N-linked (GlcNAc...) asparagine glycosylation occurs at Asn813. Catalysis depends on charge relay system residues Asp831 and His864. Asn900 is a glycosylation site (N-linked (GlcNAc...) asparagine).

This sequence belongs to the peptidase S9B family.

The protein localises to the vacuole membrane. The catalysed reaction is Release of an N-terminal dipeptide, Xaa-Yaa-|-Zaa-, from a polypeptide, preferentially when Yaa is Pro, provided Zaa is neither Pro nor hydroxyproline.. Type IV dipeptidyl-peptidase which removes N-terminal dipeptides sequentially from polypeptides having unsubstituted N-termini provided that the penultimate residue is proline. This Blastomyces gilchristii (strain SLH14081) (Blastomyces dermatitidis) protein is Probable dipeptidyl-aminopeptidase B (DAPB).